The chain runs to 113 residues: Putative pterin-4-alpha-carbinolamine dehydratase (113 aa).

It belongs to the pterin-4-alpha-carbinolamine dehydratase family.

It carries out the reaction (4aS,6R)-4a-hydroxy-L-erythro-5,6,7,8-tetrahydrobiopterin = (6R)-L-erythro-6,7-dihydrobiopterin + H2O. This is Putative pterin-4-alpha-carbinolamine dehydratase from Chlorobium limicola (strain DSM 245 / NBRC 103803 / 6330).